A 167-amino-acid polypeptide reads, in one-letter code: Inclusion membrane protein G (167 aa).

The next 2 membrane-spanning stretches (helical) occupy residues 37 to 57 and 63 to 83; these read LSLF…AVLF and VLPY…AVIV. 2 disordered regions span residues 97-136 and 148-167; these read KRSP…STFG and VSGA…SHSF. Positions 122 to 134 are enriched in low complexity; sequence ESASPQASPTSST. The Phosphorylation-dependent binding motif signature appears at 161 to 166; the sequence is RSRSHS. Serine 166 is modified (phosphoserine).

Post-translationally, phosphorylated by chlamydial kinase Pnk1.

The protein resides in the secreted. Its subcellular location is the host vacuole. It is found in the host pathogen-containing vacuole. It localises to the host pathogen-containing vacuole membrane. In terms of biological role, inclusion membrane protein probably involved in early modification events of the chlamydial inclusion. Binds to the host cell 14-3-3 beta (YWHAB); phosphorylation of Ser-166 is probably required. This chain is Inclusion membrane protein G (incG), found in Chlamydia trachomatis serovar D (strain ATCC VR-885 / DSM 19411 / UW-3/Cx).